The following is a 248-amino-acid chain: Anamorsin homolog (248 aa).

The tract at residues 4–129 (FKGLQKSLYI…ETGSSARLSF (126 aa)) is N-terminal SAM-like domain. The segment at 130–161 (AKKNANAVNVWKISGDDEELIDEEELLDEEDK) is linker. Residues cysteine 172, cysteine 181, cysteine 184, and cysteine 186 each contribute to the [2Fe-2S] cluster site. Residues 172 to 186 (CSTTGKRKACKNCSC) are fe-S binding site A. [4Fe-4S] cluster-binding residues include cysteine 209, cysteine 212, cysteine 220, and cysteine 223. 2 short sequence motifs (cx2C motif) span residues 209–212 (CGNC) and 220–223 (CSTC). The interval 209–223 (CGNCYLGDAFRCSTC) is fe-S binding site B.

Belongs to the anamorsin family. As to quaternary structure, monomer. Requires [2Fe-2S] cluster as cofactor. It depends on [4Fe-4S] cluster as a cofactor.

Its subcellular location is the cytoplasm. The protein resides in the mitochondrion intermembrane space. Functionally, component of the cytosolic iron-sulfur (Fe-S) protein assembly (CIA) machinery. Required for the maturation of extramitochondrial Fe-S proteins. Part of an electron transfer chain functioning in an early step of cytosolic Fe-S biogenesis, facilitating the de novo assembly of a [4Fe-4S] cluster on the cytosolic Fe-S scaffold complex. Electrons are transferred from NADPH via a FAD- and FMN-containing diflavin oxidoreductase. Together with the diflavin oxidoreductase, also required for the assembly of the diferric tyrosyl radical cofactor of ribonucleotide reductase (RNR), probably by providing electrons for reduction during radical cofactor maturation in the catalytic small subunit. This chain is Anamorsin homolog, found in Drosophila simulans (Fruit fly).